We begin with the raw amino-acid sequence, 748 residues long: Disintegrin and metalloproteinase domain-containing protein 10 (748 aa).

Positions 1-19 (MVLLRVLILLLSWVAGLGG) are cleaved as a signal peptide. Residues 20–213 (QYGNPLNKYI…NGPELLRKKR (194 aa)) constitute a propeptide that is removed on maturation. Over 20-672 (QYGNPLNKYI…SPELYENIAE (653 aa)) the chain is Extracellular. The Cysteine switch signature appears at 171–178 (GGCADHSV). Cys-173 contributes to the Zn(2+) binding site. The Peptidase M12B domain occupies 220-456 (NTCQLYIQTD…KRNNCFVESG (237 aa)). N-linked (GlcNAc...) asparagine glycosylation is found at Asn-267 and Asn-278. 16 disulfide bridges follow: Cys-344–Cys-451, Cys-399–Cys-435, Cys-460–Cys-495, Cys-471–Cys-484, Cys-473–Cys-479, Cys-483–Cys-515, Cys-503–Cys-511, Cys-510–Cys-536, Cys-524–Cys-543, Cys-530–Cys-562, Cys-555–Cys-567, Cys-572–Cys-598, Cys-580–Cys-607, Cys-582–Cys-597, Cys-594–Cys-639, and Cys-632–Cys-645. Residue His-383 participates in Zn(2+) binding. Glu-384 is a catalytic residue. Positions 387 and 393 each coordinate Zn(2+). The N-linked (GlcNAc...) asparagine glycan is linked to Asn-439. Positions 457 to 551 (QPICGNGMVE…LCPASDPKPN (95 aa)) constitute a Disintegrin domain. The N-linked (GlcNAc...) asparagine glycan is linked to Asn-551. A helical membrane pass occupies residues 673–696 (WIVAYWWAVLLMGIALIMLMAGFI). Residues 697-748 (KICSVHTPSSNPKLPPPKPLPGTLKRRRPPQPIQQPQRQRPRESYQMGHMRR) lie on the Cytoplasmic side of the membrane. Positions 704–748 (PSSNPKLPPPKPLPGTLKRRRPPQPIQQPQRQRPRESYQMGHMRR) are disordered. An SH3-binding motif is present at residues 708-715 (PKLPPPKP). At Thr-719 the chain carries Phosphothreonine. An SH3-binding motif is present at residues 722–728 (RRRPPQP). The tract at residues 734–748 (RQRPRESYQMGHMRR) is interaction with AP2A1, AP2A2 and AP2M1.

Forms a ternary EFNA5-EPHA3-ADAM10 complex mediating EFNA5 extracellular domain shedding by ADAM10 which regulates the EFNA5-EPHA3 complex internalization and function, the cleavage occurs in trans, with ADAM10 and its substrate being on the membranes of opposing cells. Interacts with the clathrin adapter AP2 complex subunits AP2A1, AP2A2, AP2B1, and AP2M1; this interaction facilitates ADAM10 endocytosis from the plasma membrane during long-term potentiation in hippocampal neurons. Forms a ternary complex composed of ADAM10, EPHA4 and CADH1; within the complex, ADAM10 cleaves CADH1 which disrupts adherens junctions. Interacts with EPHA2. Interacts with NGF in a divalent cation-dependent manner. Interacts with TSPAN14; the interaction promotes ADAM10 maturation and cell surface expression. Interacts with TSPAN5, TSPAN10, TSPAN14, TSPAN15, TSPAN17 and TSPAN33; these interactions regulate ADAM10 substrate specificity, endocytosis and turnover. Interacts (via extracellular domain) with TSPAN33 (via extracellular domain) and (via cytoplasmic domain) with AFDN; interaction with TSPAN33 allows the docking of ADAM10 to zonula adherens through a PDZ11-dependent interaction between TSPAN33 and PLEKHA7 while interaction with AFDN locks ADAM10 at zonula adherens. Interacts with DLG1; this interaction recruits ADAM10 to the cell membrane during long-term depression in hippocampal neurons. Interacts (via extracellular domain) with BACE1 (via extracellular domain). Interacts with FAM171A1. The cofactor is Zn(2+). The precursor is cleaved by furin and PCSK7. In terms of tissue distribution, expressed at low level in kidney, spleen, lung, adrenal, heart and peripheral nerve.

It localises to the golgi apparatus membrane. The protein resides in the cell membrane. Its subcellular location is the cytoplasmic vesicle. It is found in the clathrin-coated vesicle. The protein localises to the cell projection. It localises to the axon. The protein resides in the dendrite. Its subcellular location is the cell junction. It is found in the adherens junction. The protein localises to the cytoplasm. It catalyses the reaction Endopeptidase of broad specificity.. Catalytically inactive when the propeptide is intact and associated with the mature enzyme. The disintegrin and cysteine-rich regions modulate access of substrates to exerts an inhibitory effect on the cleavage of ADAM10 substrates. Transmembrane metalloprotease which mediates the ectodomain shedding of a myriad of transmembrane proteins, including adhesion proteins, growth factor precursors and cytokines being essential for development and tissue homeostasis. Associates with six members of the tetraspanin superfamily TspanC8 which regulate its exit from the endoplasmic reticulum and its substrate selectivity. Cleaves the membrane-bound precursor of TNF-alpha at '76-Ala-|-Val-77' to its mature soluble form. Responsible for the proteolytical release of soluble JAM3 from endothelial cells surface. Responsible for the proteolytic release of several other cell-surface proteins, including heparin-binding epidermal growth-like factor, ephrin-A2, CD44, CDH2 and for constitutive and regulated alpha-secretase cleavage of amyloid precursor protein (APP). Contributes to the normal cleavage of the cellular prion protein. Involved in the cleavage of the adhesion molecule L1 at the cell surface and in released membrane vesicles, suggesting a vesicle-based protease activity. Also controls the proteolytic processing of Notch and mediates lateral inhibition during neurogenesis. Required for the development of type 1 transitional B cells into marginal zone B cells, probably by cleaving Notch. Responsible for the FasL ectodomain shedding and for the generation of the remnant ADAM10-processed FasL (FasL APL) transmembrane form. Also cleaves the ectodomain of the integral membrane proteins CORIN and ITM2B. Mediates the proteolytic cleavage of LAG3, leading to release the secreted form of LAG3. Mediates the proteolytic cleavage of IL6R and IL11RA, leading to the release of secreted forms of IL6R and IL11RA. Enhances the cleavage of CHL1 by BACE1. Cleaves NRCAM. Cleaves TREM2, resulting in shedding of the TREM2 ectodomain. Involved in the development and maturation of glomerular and coronary vasculature. During development of the cochlear organ of Corti, promotes pillar cell separation by forming a ternary complex with CADH1 and EPHA4 and cleaving CADH1 at adherens junctions. May regulate the EFNA5-EPHA3 signaling. Regulates leukocyte transmigration as a sheddase for the adherens junction protein VE-cadherin/CDH5 in endothelial cells. This is Disintegrin and metalloproteinase domain-containing protein 10 (ADAM10) from Bos taurus (Bovine).